A 640-amino-acid polypeptide reads, in one-letter code: MELIPLIRDKSRLSDFLKDIPNDPGCYLMKDGEDRLLYVGKSKKLRNRVRSYFRSGNELSPRISLMVRQVADIELIVTDNESEALTLESNLIKSHQPYFNVLLKDDKKYPYVCITWGDKYPRIFLTRKRRQRQLKDKYYGPYVDVYLLRKTLFSIKKLFPLRQRRIPLYKDRTCLNYSIGRCPGVCQEEISSEDYKNTLKRVEMIFQGRTDELRILLEKQMISFSESLKFEEAGSVRDQLKGIDRLYESQKMIIPDSSVCRDIIAMASEENISSVQIFQMRSGKLIGRLGYFSDNSNFNSSQILQQVIENHYSNVDPVEIPSEILVQHQLVNNILISDWLSEIKKQKVNINVPKRSRKAEIIKLVEKNANLELQRIKQSHDKNLVELDDLTNILDLENIPKRIECYDISHIQGSDAVASQVVFIDGIAARQHYRRYKIKSPNIKIGHSDDFESMAEVITRRFRRWARFKEEGGDINALLSNQSSVLDNLNLNDWPDLVVIDGGKGQLSSVVAALEELKLDQNLNVISLAKKKEEVFIPNVKQSLVTESNQPGMLLLRRLRDEAHRFAITFHRQKRSQRMKRSQLNEIPGLGPQRIKLLLEHFRSIEAIQMATFSELSSTPGLGRSTAVVIRNYFHPDKNK.

Residues 22–101 form the GIY-YIG domain; it reads NDPGCYLMKD…IKSHQPYFNV (80 aa). In terms of domain architecture, UVR spans 211-246; that stretch reads DELRILLEKQMISFSESLKFEEAGSVRDQLKGIDRL.

This sequence belongs to the UvrC family. As to quaternary structure, interacts with UvrB in an incision complex.

Its subcellular location is the cytoplasm. Functionally, the UvrABC repair system catalyzes the recognition and processing of DNA lesions. UvrC both incises the 5' and 3' sides of the lesion. The N-terminal half is responsible for the 3' incision and the C-terminal half is responsible for the 5' incision. The protein is UvrABC system protein C of Prochlorococcus marinus (strain NATL1A).